A 317-amino-acid polypeptide reads, in one-letter code: Transcription factor EC (317 aa).

A necessary for transcriptional transactivation region spans residues 1 to 90 (MTFDCRVCDQ…GLTDAPCPSI (90 aa)). Residues 110 to 163 (QKKDNHNLIERRRRYNINYRIKELGTLIPKSNDPDMRWNKGTILKASVDYIKWL) enclose the bHLH domain. The necessary for transcriptional transactivation stretch occupies residues 242-317 (TSPEFYEQAV…SLSSEDGDEL (76 aa)).

This sequence belongs to the MiT/TFE family. Homodimer. Forms heterodimers with MITF. Interacts with MITF. Forms heterodimers with TFE3. Expressed in osteoclast-like cells (at protein level). Expressed in cells of the mononuclear phagocyte lineage. Expressed in macrophages and in osteoclast-like cells.

It is found in the nucleus. Its function is as follows. Transcriptional regulator that acts as a repressor or an activator. Acts as a transcriptional transactivator on the proximal promoter region of the tartrate-resistant acid phosphatase (TRAP) E-box containing promoter. Collaborates with MITF in target gene activation. Acts as a transcriptional repressor on minimal promoter containing element F (that includes an E-box sequence). Binds to element F in an E-box sequence-specific manner. Acts as a transcriptional repressor on minimal promoter containing mu E3 enhancer sequence. Binds to mu E3 DNA sequence of the immunoglobulin heavy-chain gene enhancer. Binds DNA in a homo- or heterodimeric form. The sequence is that of Transcription factor EC (Tfec) from Mus musculus (Mouse).